The chain runs to 378 residues: Spermidine/putrescine import ATP-binding protein PotA (378 aa).

One can recognise an ABC transporter domain in the interval 18-248; that stretch reads VLLSGISKSF…PKNLFVAGFI (231 aa). 50–57 contributes to the ATP binding site; the sequence is GPSGCGKT.

Belongs to the ABC transporter superfamily. Spermidine/putrescine importer (TC 3.A.1.11.1) family. In terms of assembly, the complex is composed of two ATP-binding proteins (PotA), two transmembrane proteins (PotB and PotC) and a solute-binding protein (PotD).

Its subcellular location is the cell inner membrane. It carries out the reaction ATP + H2O + polyamine-[polyamine-binding protein]Side 1 = ADP + phosphate + polyamineSide 2 + [polyamine-binding protein]Side 1.. Functionally, part of the ABC transporter complex PotABCD involved in spermidine/putrescine import. Responsible for energy coupling to the transport system. This chain is Spermidine/putrescine import ATP-binding protein PotA, found in Salmonella typhi.